We begin with the raw amino-acid sequence, 317 residues long: Putative cuticle collagen 80 (317 aa).

Residues 80 to 262 (CNCGPQASNC…GAPGNDGAPG (183 aa)) form a disordered region. Triple-helical region regions lie at residues 92-124 (GPPG…AGPA), 137-199 (GAPG…SGQR), and 202-264 (GLPG…PGSD). Composition is skewed to low complexity over residues 108-124 (QPGP…AGPA), 135-145 (PQGAPGPAGAP), and 175-206 (AGDA…LPGP). Pro residues-rich tracts occupy residues 207-219 (SGRP…PGAP) and 230-240 (PAGPPGPPGPN). A compositionally biased stretch (low complexity) spans 242 to 262 (QPGHPGQDGQPGAPGNDGAPG).

Belongs to the cuticular collagen family. In terms of assembly, collagen polypeptide chains are complexed within the cuticle by disulfide bonds and other types of covalent cross-links.

Functionally, nematode cuticles are composed largely of collagen-like proteins. The cuticle functions both as an exoskeleton and as a barrier to protect the worm from its environment. This chain is Putative cuticle collagen 80 (col-80), found in Caenorhabditis elegans.